The primary structure comprises 328 residues: Ketol-acid reductoisomerase (NADP(+)) (328 aa).

The KARI N-terminal Rossmann domain maps to 2-182 (AKIYRDVDAS…GATRAGVIET (181 aa)). NADP(+) is bound by residues 25-28 (YGIQ), Arg-48, Ser-53, and 83-86 (DMEQ). Residue His-108 is part of the active site. NADP(+) is bound at residue Gly-134. One can recognise a KARI C-terminal knotted domain in the interval 183–328 (TFAEETETDL…IEMRRLLFGQ (146 aa)). Mg(2+)-binding residues include Asp-191, Glu-195, Glu-227, and Glu-231. Ser-252 contacts substrate.

The protein belongs to the ketol-acid reductoisomerase family. The cofactor is Mg(2+).

The enzyme catalyses (2R)-2,3-dihydroxy-3-methylbutanoate + NADP(+) = (2S)-2-acetolactate + NADPH + H(+). The catalysed reaction is (2R,3R)-2,3-dihydroxy-3-methylpentanoate + NADP(+) = (S)-2-ethyl-2-hydroxy-3-oxobutanoate + NADPH + H(+). Its pathway is amino-acid biosynthesis; L-isoleucine biosynthesis; L-isoleucine from 2-oxobutanoate: step 2/4. The protein operates within amino-acid biosynthesis; L-valine biosynthesis; L-valine from pyruvate: step 2/4. Functionally, involved in the biosynthesis of branched-chain amino acids (BCAA). Catalyzes an alkyl-migration followed by a ketol-acid reduction of (S)-2-acetolactate (S2AL) to yield (R)-2,3-dihydroxy-isovalerate. In the isomerase reaction, S2AL is rearranged via a Mg-dependent methyl migration to produce 3-hydroxy-3-methyl-2-ketobutyrate (HMKB). In the reductase reaction, this 2-ketoacid undergoes a metal-dependent reduction by NADPH to yield (R)-2,3-dihydroxy-isovalerate. The chain is Ketol-acid reductoisomerase (NADP(+)) from Pyrobaculum arsenaticum (strain DSM 13514 / JCM 11321 / PZ6).